A 158-amino-acid chain; its full sequence is Large ribosomal subunit protein bL35m (158 aa).

This sequence belongs to the bacterial ribosomal protein bL35 family.

It is found in the mitochondrion. This Caenorhabditis elegans protein is Large ribosomal subunit protein bL35m (mrpl-35).